The following is a 115-amino-acid chain: ER exit protein (115 aa).

The protein belongs to the STEEP1 family.

May stimulate membrane curvature formation and subsequent endoplasmic reticulum exit site (ERES) establishment. This Schizosaccharomyces pombe (strain 972 / ATCC 24843) (Fission yeast) protein is ER exit protein.